A 195-amino-acid chain; its full sequence is BH3-interacting domain death agonist (195 aa).

Met1 carries the post-translational modification N-acetylmethionine. Polar residues predominate over residues 58-69 (TDGSQASRSFNQ). Residues 58–77 (TDGSQASRSFNQGRIEPDSE) form a disordered region. Residue Ser78 is modified to Phosphoserine. A BH3 motif is present at residues 87 to 100 (ARHLAQIGDEMDHN).

In terms of assembly, forms heterodimers either with the pro-apoptotic protein BAX or the anti-apoptotic protein BCL2. Interacts with PLEKHN1. As to quaternary structure, interacts with ITCH. Interacts with MTCH2. In terms of processing, TNF-alpha induces caspase-mediated cleavage into a major p15 and minor p13 and p11 products. Cleaved by CASP6 into a major p15 and minor p13 products, leading to release of cytochrome c and subsequent nonalcoholic steatohepatitis. Post-translationally, ubiquitinated by ITCH; ubiquitination results in proteasome-dependent degradation.

The protein resides in the cytoplasm. Its subcellular location is the mitochondrion membrane. The protein localises to the mitochondrion outer membrane. In terms of biological role, induces caspases and apoptosis. Counters the protective effect of BCL2. Functionally, induces caspase activation and apoptosis. Allows the release of cytochrome c. The sequence is that of BH3-interacting domain death agonist (Bid) from Mus musculus (Mouse).